A 346-amino-acid polypeptide reads, in one-letter code: Phosphoribosylformylglycinamidine cyclo-ligase (346 aa).

It belongs to the AIR synthase family.

It localises to the cytoplasm. It catalyses the reaction 2-formamido-N(1)-(5-O-phospho-beta-D-ribosyl)acetamidine + ATP = 5-amino-1-(5-phospho-beta-D-ribosyl)imidazole + ADP + phosphate + H(+). It functions in the pathway purine metabolism; IMP biosynthesis via de novo pathway; 5-amino-1-(5-phospho-D-ribosyl)imidazole from N(2)-formyl-N(1)-(5-phospho-D-ribosyl)glycinamide: step 2/2. This Photobacterium profundum (strain SS9) protein is Phosphoribosylformylglycinamidine cyclo-ligase.